A 55-amino-acid chain; its full sequence is Conotoxin Cal14.14 (55 aa).

Residues 1–20 form the signal peptide; sequence MFRLGVFLLTFLLLVSMATS. 2 disulfide bridges follow: Cys34/Cys48 and Cys38/Cys52.

Expressed by the venom duct.

It localises to the secreted. Functionally, probable neurotoxin. This is Conotoxin Cal14.14 from Californiconus californicus (California cone).